We begin with the raw amino-acid sequence, 475 residues long: MAPQTETQAKAGFKAGVKDYRLTYYTPDYQVKDTDILAAFRMTPQPGVPPEECGAAVAAESSTGTWTTVWTDGLTSLDRYKGRCYDLEPVAGEDNQYIAYVAYPLDLFEEGSVTNLFTSIVGNVFGFKALRALRLEDLRISVAYCKTFQGAPHGIQVERDKLNKYGRGLLGCTIKPKLGLSAKNYGRAVYECLRGGLDFTKDDENVNSQPFMRWRDRFLFCAEAIYKAQAETGEIKGHYLNATAGTSEEMLKRAVFAKELGVPIIMHDYLTGGFTANTSLAYYCRDNGLLLHIHRAMHAVIDRQRNHGIHFRVLAKALRLSGGDHLHSGTVVGKLEGEREVTLGFVDLMRDAYVEKDRSRGIYFTQDWASLPGVMPVASGGIHVWHMPALVEIFGDDACLQFGGGTLGHPWGNAPGAAANRVALEACTQARNEGRDLAREGGDVIRAACKWSPELAAACEVWKEIKFEFDTVDTL.

A propeptide spanning residues 1–2 (MA) is cleaved from the precursor. Proline 3 bears the N-acetylproline mark. Lysine 14 carries the post-translational modification N6,N6,N6-trimethyllysine. Positions 123 and 173 each coordinate substrate. Catalysis depends on lysine 175, which acts as the Proton acceptor. Lysine 177 provides a ligand contact to substrate. Lysine 201, aspartate 203, and glutamate 204 together coordinate Mg(2+). Position 201 is an N6-carboxylysine (lysine 201). Histidine 294 functions as the Proton acceptor in the catalytic mechanism. Substrate-binding residues include arginine 295, histidine 327, and serine 379.

Belongs to the RuBisCO large chain family. Type I subfamily. As to quaternary structure, heterohexadecamer of 8 large chains and 8 small chains. Requires Mg(2+) as cofactor.

Its subcellular location is the plastid. The protein localises to the chloroplast. The catalysed reaction is 2 (2R)-3-phosphoglycerate + 2 H(+) = D-ribulose 1,5-bisphosphate + CO2 + H2O. It carries out the reaction D-ribulose 1,5-bisphosphate + O2 = 2-phosphoglycolate + (2R)-3-phosphoglycerate + 2 H(+). Its function is as follows. RuBisCO catalyzes two reactions: the carboxylation of D-ribulose 1,5-bisphosphate, the primary event in carbon dioxide fixation, as well as the oxidative fragmentation of the pentose substrate in the photorespiration process. Both reactions occur simultaneously and in competition at the same active site. The chain is Ribulose bisphosphate carboxylase large chain from Nephroselmis olivacea (Green alga).